The chain runs to 211 residues: MRLTAKQVTWLKVCLHLAGLLPFLWLVWAINHGGLGADPVKDIQHFTGRTALKFLLATLLITPLARYAKQPLLIRTRRLLGLWCFAWATLHLTSYALLELGVNNLALLGKELITRPYLTLGIISWVILLALAFTSTQAMQRKLGKHWQQLHNFVYLVAILAPIHYLWSVKIISPQPLIYAGLAVLLLALRYKKLRSLFNRLRKQVHNKLSV.

The next 4 helical transmembrane spans lie at Trp10–Ile30, Leu82–Val102, Pro116–Thr136, and Phe153–Ser173.

The protein belongs to the MsrQ family. In terms of assembly, heterodimer of a catalytic subunit (MsrP) and a heme-binding subunit (MsrQ). FMN is required as a cofactor. Requires heme b as cofactor.

It localises to the cell inner membrane. Functionally, part of the MsrPQ system that repairs oxidized periplasmic proteins containing methionine sulfoxide residues (Met-O), using respiratory chain electrons. Thus protects these proteins from oxidative-stress damage caused by reactive species of oxygen and chlorine generated by the host defense mechanisms. MsrPQ is essential for the maintenance of envelope integrity under bleach stress, rescuing a wide series of structurally unrelated periplasmic proteins from methionine oxidation, including the primary periplasmic chaperone SurA and the lipoprotein Pal. MsrQ provides electrons for reduction to the reductase catalytic subunit MsrP, using the quinone pool of the respiratory chain. The protein is Protein-methionine-sulfoxide reductase heme-binding subunit MsrQ of Shigella dysenteriae serotype 1 (strain Sd197).